We begin with the raw amino-acid sequence, 455 residues long: Golgi pH regulator (455 aa).

The next 4 membrane-spanning stretches (helical) occupy residues 46–66 (ITFA…LGAL), 79–99 (LYVI…YFVV), 111–131 (LFAC…GDPF), and 150–170 (VGVI…VNCP). Asparagine 180 and asparagine 243 each carry an N-linked (GlcNAc...) asparagine glycan. The next 4 helical transmembrane spans lie at 290–310 (GYFF…NIVF), 343–363 (ISFI…LITL), 378–398 (VIVL…VLLM), and 425–445 (WFDV…YLAH).

This sequence belongs to the Golgi pH regulator (TC 1.A.38) family. Homotrimer.

It localises to the golgi apparatus membrane. It catalyses the reaction iodide(out) = iodide(in). The catalysed reaction is chloride(in) = chloride(out). It carries out the reaction bromide(in) = bromide(out). The enzyme catalyses fluoride(in) = fluoride(out). Voltage-gated channel that enables the transfer of anions such as iodide, chloride, bromide and fluoride which may function in counter-ion conductance and participates in Golgi acidification. The chain is Golgi pH regulator from Salmo salar (Atlantic salmon).